A 360-amino-acid polypeptide reads, in one-letter code: 3-dehydroquinate synthase (360 aa).

NAD(+) contacts are provided by residues 69–74 (DGEKYK), 103–107 (GVVGD), 127–128 (TT), lysine 140, lysine 149, and 167–170 (TLDT). Residues glutamate 182, histidine 246, and histidine 263 each coordinate Zn(2+).

This sequence belongs to the sugar phosphate cyclases superfamily. Dehydroquinate synthase family. Requires Co(2+) as cofactor. Zn(2+) is required as a cofactor. It depends on NAD(+) as a cofactor.

It localises to the cytoplasm. It catalyses the reaction 7-phospho-2-dehydro-3-deoxy-D-arabino-heptonate = 3-dehydroquinate + phosphate. The protein operates within metabolic intermediate biosynthesis; chorismate biosynthesis; chorismate from D-erythrose 4-phosphate and phosphoenolpyruvate: step 2/7. Catalyzes the conversion of 3-deoxy-D-arabino-heptulosonate 7-phosphate (DAHP) to dehydroquinate (DHQ). This chain is 3-dehydroquinate synthase, found in Vesicomyosocius okutanii subsp. Calyptogena okutanii (strain HA).